A 278-amino-acid polypeptide reads, in one-letter code: Bifunctional protein FolD (278 aa).

NADP(+) is bound by residues 163 to 165 (GRS), Ser188, and Val229.

The protein belongs to the tetrahydrofolate dehydrogenase/cyclohydrolase family. As to quaternary structure, homodimer.

It catalyses the reaction (6R)-5,10-methylene-5,6,7,8-tetrahydrofolate + NADP(+) = (6R)-5,10-methenyltetrahydrofolate + NADPH. The enzyme catalyses (6R)-5,10-methenyltetrahydrofolate + H2O = (6R)-10-formyltetrahydrofolate + H(+). It participates in one-carbon metabolism; tetrahydrofolate interconversion. Functionally, catalyzes the oxidation of 5,10-methylenetetrahydrofolate to 5,10-methenyltetrahydrofolate and then the hydrolysis of 5,10-methenyltetrahydrofolate to 10-formyltetrahydrofolate. This is Bifunctional protein FolD from Exiguobacterium sp. (strain ATCC BAA-1283 / AT1b).